The sequence spans 215 residues: Meiotic chromosome segregation protein P8B7.28c (215 aa).

The interval 159-202 (TINSEYADDVSDNTDEERTESKGQQESNSAEEYDDDDSDEDRME) is disordered. Acidic residues-rich tracts occupy residues 164–176 (YADD…DEER) and 187–201 (SAEE…EDRM).

It localises to the nucleus. Its subcellular location is the nucleolus. In terms of biological role, required for meiotic chromosome segregation. This chain is Meiotic chromosome segregation protein P8B7.28c, found in Schizosaccharomyces pombe (strain 972 / ATCC 24843) (Fission yeast).